We begin with the raw amino-acid sequence, 140 residues long: Neuropeptide CCHamide-2 (140 aa).

Residues 1–22 (MAQMYLAVTIIALLAISHGVSA) form the signal peptide. A disulfide bridge links cysteine 26 with cysteine 33. Histidine amide is present on histidine 37. A propeptide spanning residues 41-140 (SGDTSAMDQL…PDDGYYIESL (100 aa)) is cleaved from the precursor.

As to expression, expressed in corpora cardiaca (CC), corpora allata (CA), antennal lobe (AL) and gnathal ganglion (GNG) (at protein level). Expression detected in few animals (at protein level).

The protein resides in the secreted. In terms of biological role, ligand for the CCHamide-2 receptor CCHa2-R. The protein is Neuropeptide CCHamide-2 of Agrotis ipsilon (Black cutworm moth).